An 893-amino-acid chain; its full sequence is AP-4 complex accessory subunit RUSC1 (893 aa).

Disordered regions lie at residues 31-223 (ELRE…GKAE), 237-332 (EKTE…KDRS), 339-358 (SPDTELPPTGSLGGSLAPPR), and 366-444 (LRSR…RAHA). Polar residues predominate over residues 77–87 (HGSSIENQQDP). Composition is skewed to low complexity over residues 95 to 117 (SPSDPGCSSSLSSCSDLSPDESP) and 149 to 165 (PSTCSPDSFCCSPDSCS). Polar residues predominate over residues 177–187 (SNCNALTTCQD). A compositionally biased stretch (basic and acidic residues) spans 237–257 (EKTEAGWKTIEDSDSGRKTDE). Composition is skewed to pro residues over residues 373 to 382 (QPPPVPPRDP) and 390 to 399 (PPRPPPPPVP). The interaction with TRAF6 stretch occupies residues 463–598 (MAEAQSGTGQ…FHAFILGLLN (136 aa)). Residues 515-659 (DVGHLVLTTL…LTFHLDLLFE (145 aa)) form the RUN domain. An interaction with IKBKG region spans residues 599–665 (TKQLELWFSS…LLFEHHHHLP (67 aa)). Disordered regions lie at residues 700-721 (RGTSGESTTDSSTPSARPPAGS) and 751-772 (HGTTAEAAQEAPPPTEQTTPGR). 2 stretches are compositionally biased toward low complexity: residues 702–714 (TSGESTTDSSTPS) and 754–770 (TAEAAQEAPPPTEQTTP). The region spanning 835–893 (QADRAVRALCDHTAAGPDQLSFQRGELLRVIATVDEDWLRCGRDGVEGLVPVGYTSLVL) is the SH3 domain.

In terms of assembly, associated component of the adapter-like complex 4 (AP-4). Interacts with IKBKG and TRAF6. Interacts with F-actin, acetylated actin, TUBB3, STX1A, KIF5B and KLC1. Phosphorylated on serine residues following nuclear translocation. Post-translationally, polyubiquitinated; polyubiquitination involves TRAF6. In terms of tissue distribution, expressed in brain, brain stem and spinal cord (at protein level).

The protein resides in the cytoplasm. It localises to the nucleus. The protein localises to the cytoskeleton. It is found in the cytoplasmic vesicle. Its subcellular location is the early endosome. The protein resides in the postsynaptic density. It localises to the golgi apparatus. Functionally, associates with the adapter-like complex 4 (AP-4) and may therefore play a role in vesicular trafficking of proteins at the trans-Golgi network. Signaling adapter which plays a role in neuronal differentiation. Involved in regulation of NGF-dependent neurite outgrowth. May play a role in neuronal vesicular trafficking, specifically involving pre-synaptic membrane proteins. Seems to be involved in signaling pathways that are regulated by the prolonged activation of MAPK. Can regulate the polyubiquitination of IKBKG and thus may be involved in regulation of the NF-kappa-B pathway. The polypeptide is AP-4 complex accessory subunit RUSC1 (Mus musculus (Mouse)).